A 373-amino-acid polypeptide reads, in one-letter code: SAM domain-containing protein SAMSN-1 (373 aa).

The interval 1–72 is disordered; sequence MLKRKPSNVS…GGGLGKKMRA (72 aa). The Important for interaction with 14-3-3 proteins signature appears at 20-25; sequence RSSSFG. Phosphoserine is present on residues Ser-23 and Ser-34. Residues 37 to 48 show a composition bias toward basic and acidic residues; it reads KPDDSTEAHEGD. Positions 50-61 are enriched in polar residues; that stretch reads TNGSGEQSKTSN. Position 74 is a phosphoserine (Ser-74). Thr-76 bears the Phosphothreonine mark. Residues Ser-90 and Ser-119 each carry the phosphoserine modification. The tract at residues 91–153 is disordered; sequence EEKDEEDGEN…DGTSNRDSFR (63 aa). Residues 123–146 are compositionally biased toward low complexity; the sequence is SDSMDSLYSGQSSSSGITSCSDGT. Tyr-160 carries the phosphotyrosine modification. An SH3 domain is found at 163–224; sequence PFCGRARVHT…KFIYVDVISE (62 aa). The 65-residue stretch at 241-305 folds into the SAM domain; the sequence is KKSKTLQEFL…LSAAENFLEE (65 aa). Positions 337–359 are disordered; that stretch reads DSGCYISSGNSDNGKEDLESENL.

In terms of assembly, interacts with FASLG. Interacts with phosphotyrosine containing proteins. Interacts (via SH3 domain) with CTTN. Interacts (phosphorylated at Ser-23) with YWHAB, YWHAE, YWHAG, YWHAH, YWHAZ and SFN. Interacts directly with SAP30 and HDAC1. Identified in a complex with SAP30 and HDAC1. As to expression, detected in peripheral blood B-cells (at protein level). Detected in spleen, liver and peripheral blood.

It is found in the nucleus. The protein resides in the cytoplasm. It localises to the cell projection. Its subcellular location is the ruffle. Functionally, negative regulator of B-cell activation. Down-regulates cell proliferation (in vitro). Promotes RAC1-dependent membrane ruffle formation and reorganization of the actin cytoskeleton. Regulates cell spreading and cell polarization. Stimulates HDAC1 activity. Regulates LYN activity by modulating its tyrosine phosphorylation. The polypeptide is SAM domain-containing protein SAMSN-1 (SAMSN1) (Homo sapiens (Human)).